We begin with the raw amino-acid sequence, 491 residues long: Aspartyl/glutamyl-tRNA(Asn/Gln) amidotransferase subunit B (491 aa).

The protein belongs to the GatB/GatE family. GatB subfamily. Heterotrimer of A, B and C subunits.

It catalyses the reaction L-glutamyl-tRNA(Gln) + L-glutamine + ATP + H2O = L-glutaminyl-tRNA(Gln) + L-glutamate + ADP + phosphate + H(+). The enzyme catalyses L-aspartyl-tRNA(Asn) + L-glutamine + ATP + H2O = L-asparaginyl-tRNA(Asn) + L-glutamate + ADP + phosphate + 2 H(+). Functionally, allows the formation of correctly charged Asn-tRNA(Asn) or Gln-tRNA(Gln) through the transamidation of misacylated Asp-tRNA(Asn) or Glu-tRNA(Gln) in organisms which lack either or both of asparaginyl-tRNA or glutaminyl-tRNA synthetases. The reaction takes place in the presence of glutamine and ATP through an activated phospho-Asp-tRNA(Asn) or phospho-Glu-tRNA(Gln). This chain is Aspartyl/glutamyl-tRNA(Asn/Gln) amidotransferase subunit B, found in Paraburkholderia xenovorans (strain LB400).